We begin with the raw amino-acid sequence, 347 residues long: Selenide, water dikinase (347 aa).

Residue cysteine 17 is part of the active site. ATP is bound by residues lysine 20 and 48-50; that span reads TRD. Aspartate 51 contacts Mg(2+). ATP is bound by residues aspartate 68, aspartate 91, and 139 to 141; that span reads GHS. Aspartate 91 is a Mg(2+) binding site. Aspartate 227 lines the Mg(2+) pocket.

The protein belongs to the selenophosphate synthase 1 family. Class I subfamily. Homodimer. It depends on Mg(2+) as a cofactor.

It carries out the reaction hydrogenselenide + ATP + H2O = selenophosphate + AMP + phosphate + 2 H(+). Its function is as follows. Synthesizes selenophosphate from selenide and ATP. The chain is Selenide, water dikinase from Salmonella typhimurium (strain LT2 / SGSC1412 / ATCC 700720).